We begin with the raw amino-acid sequence, 73 residues long: Translational regulator CsrA (73 aa).

It belongs to the CsrA/RsmA family. As to quaternary structure, homodimer; the beta-strands of each monomer intercalate to form a hydrophobic core, while the alpha-helices form wings that extend away from the core.

It is found in the cytoplasm. A translational regulator that binds mRNA to regulate translation initiation and/or mRNA stability. Usually binds in the 5'-UTR at or near the Shine-Dalgarno sequence preventing ribosome-binding, thus repressing translation. Its main target seems to be the major flagellin gene, while its function is anatagonized by FliW. This chain is Translational regulator CsrA, found in Lachnospira eligens (strain ATCC 27750 / DSM 3376 / VPI C15-48 / C15-B4) (Eubacterium eligens).